A 217-amino-acid chain; its full sequence is Octanoyltransferase (217 aa).

Residues 32–207 (SESPDELWIV…TFSQLLGYQH (176 aa)) enclose the BPL/LPL catalytic domain. Substrate is bound by residues 71-78 (RGGQVTYH), 138-140 (SLG), and 151-153 (GLA). Catalysis depends on Cys169, which acts as the Acyl-thioester intermediate.

This sequence belongs to the LipB family.

It is found in the cytoplasm. It carries out the reaction octanoyl-[ACP] + L-lysyl-[protein] = N(6)-octanoyl-L-lysyl-[protein] + holo-[ACP] + H(+). It participates in protein modification; protein lipoylation via endogenous pathway; protein N(6)-(lipoyl)lysine from octanoyl-[acyl-carrier-protein]: step 1/2. Functionally, catalyzes the transfer of endogenously produced octanoic acid from octanoyl-acyl-carrier-protein onto the lipoyl domains of lipoate-dependent enzymes. Lipoyl-ACP can also act as a substrate although octanoyl-ACP is likely to be the physiological substrate. The chain is Octanoyltransferase from Shewanella sp. (strain W3-18-1).